Reading from the N-terminus, the 178-residue chain is Large ribosomal subunit protein bL25 (178 aa).

It belongs to the bacterial ribosomal protein bL25 family. CTC subfamily. Part of the 50S ribosomal subunit; part of the 5S rRNA/L5/L18/L25 subcomplex. Contacts the 5S rRNA. Binds to the 5S rRNA independently of L5 and L18.

Its function is as follows. This is one of the proteins that binds to the 5S RNA in the ribosome where it forms part of the central protuberance. The chain is Large ribosomal subunit protein bL25 from Helicobacter pylori (strain ATCC 700392 / 26695) (Campylobacter pylori).